The chain runs to 680 residues: ATPase family AAA domain-containing protein FIGL1 (680 aa).

3 disordered regions span residues 214–234 (YGNSIGKPDNQRKTSVNNQDR), 250–275 (FGTKRPHAETSSLANDGEVKEDGAPN), and 288–352 (VRQK…GGKT). Residues 295–308 (TESPSSCLSPQSDK) are compositionally biased toward polar residues. A compositionally biased stretch (gly residues) spans 313–323 (RGYGSRSGGLR). Polar residues predominate over residues 336–346 (TNGNNVGNLTS). ATP is bound by residues Ala-406 and 446 to 451 (GTGKTM).

Belongs to the AAA ATPase family. Mg(2+) serves as cofactor.

Its subcellular location is the nucleus. The enzyme catalyses ATP + H2O = ADP + phosphate + H(+). Its function is as follows. Involved in DNA double-strand break (DBS) repair via homologous recombination (HR). Limits class II meiotic crossover (CO) formation by regulating the invasion step of meiotic HR. May counteract DMC1 and RAD51-mediated inter-homolog strand invasion to limit CO formation. Functions independently of FANCM. The polypeptide is ATPase family AAA domain-containing protein FIGL1 (Arabidopsis thaliana (Mouse-ear cress)).